We begin with the raw amino-acid sequence, 393 residues long: Carbamoyl phosphate synthase small chain (393 aa).

A CPSase region spans residues 1 to 194; the sequence is MSKDTTTYQG…TYVIEAEGEE (194 aa). 3 residues coordinate L-glutamine: serine 61, glycine 245, and glycine 247. Residues 195–390 enclose the Glutamine amidotransferase type-1 domain; sequence RHTVVAYDLG…VELMDADAQK (196 aa). The active-site Nucleophile is cysteine 273. L-glutamine-binding residues include phenylalanine 274, glutamine 277, asparagine 315, glycine 317, and phenylalanine 318. Catalysis depends on residues histidine 363 and glutamate 365.

Belongs to the CarA family. As to quaternary structure, composed of two chains; the small (or glutamine) chain promotes the hydrolysis of glutamine to ammonia, which is used by the large (or ammonia) chain to synthesize carbamoyl phosphate. Tetramer of heterodimers (alpha,beta)4.

It carries out the reaction hydrogencarbonate + L-glutamine + 2 ATP + H2O = carbamoyl phosphate + L-glutamate + 2 ADP + phosphate + 2 H(+). The catalysed reaction is L-glutamine + H2O = L-glutamate + NH4(+). It functions in the pathway amino-acid biosynthesis; L-arginine biosynthesis; carbamoyl phosphate from bicarbonate: step 1/1. Its pathway is pyrimidine metabolism; UMP biosynthesis via de novo pathway; (S)-dihydroorotate from bicarbonate: step 1/3. In terms of biological role, small subunit of the glutamine-dependent carbamoyl phosphate synthetase (CPSase). CPSase catalyzes the formation of carbamoyl phosphate from the ammonia moiety of glutamine, carbonate, and phosphate donated by ATP, constituting the first step of 2 biosynthetic pathways, one leading to arginine and/or urea and the other to pyrimidine nucleotides. The small subunit (glutamine amidotransferase) binds and cleaves glutamine to supply the large subunit with the substrate ammonia. This chain is Carbamoyl phosphate synthase small chain, found in Corynebacterium glutamicum (strain ATCC 13032 / DSM 20300 / JCM 1318 / BCRC 11384 / CCUG 27702 / LMG 3730 / NBRC 12168 / NCIMB 10025 / NRRL B-2784 / 534).